Reading from the N-terminus, the 648-residue chain is Cell surface glycoprotein MUC18 (648 aa).

The N-terminal stretch at 1-23 (MGLPRLVCAFLFAACCCCRSATG) is a signal peptide. Ig-like V-type domains follow at residues 24-131 (VPGE…HYVQ) and 141-244 (PTIQ…KEVT). At 24–560 (VPGEEKQPTP…EKKLPQQESK (537 aa)) the chain is on the extracellular side. 5 disulfide bridges follow: Cys50/Cys118, Cys163/Cys225, Cys274/Cys322, Cys367/Cys409, and Cys454/Cys501. Asn58 carries N-linked (GlcNAc...) asparagine glycosylation. Ig-like C2-type domains lie at 246–332 (PVLY…TTVM), 337–426 (PLEL…RRVS), and 432–512 (SPWM…SNTT). Residues 282 to 304 (PHFTINKKNPSTEEMEEESTDEN) form a disordered region. The N-linked (GlcNAc...) asparagine glycan is linked to Asn510. The segment covering 527–549 (DSSQTTGLSTPTVSPHSRANSTS) has biased composition (polar residues). A disordered region spans residues 527-554 (DSSQTTGLSTPTVSPHSRANSTSTEKKL). The chain crosses the membrane as a helical span at residues 561 to 581 (GVVIVAVIVCTLVLAVLGATL). At 582 to 648 (YYFYKKGKLP…QGEKYIDLRH (67 aa)) the chain is on the cytoplasmic side. Ser608 and Ser616 each carry phosphoserine. Residues 626–648 (LQGSNGDKRAPGDQGEKYIDLRH) are disordered. Residues 631-648 (GDKRAPGDQGEKYIDLRH) are compositionally biased toward basic and acidic residues.

In terms of tissue distribution, detected in lung, uterus and placenta (at protein level). Detected in heart, lung, kidney, adrenal gland, intestine, testis, skeletal muscle and aorta. Detected at low levels in adult brain, in particular in brain stem and spinal cord, but also in hippocampus, olfactory bulb and striatum (at protein level).

It is found in the cell membrane. It localises to the perikaryon. In terms of biological role, plays a role in cell adhesion, and in cohesion of the endothelial monolayer at intercellular junctions in vascular tissue. Its expression may allow melanoma cells to interact with cellular elements of the vascular system, thereby enhancing hematogeneous tumor spread. Could be an adhesion molecule active in neural crest cells during embryonic development. Acts as a surface receptor that triggers tyrosine phosphorylation of FYN and PTK2/FAK1, and a transient increase in the intracellular calcium concentration. The sequence is that of Cell surface glycoprotein MUC18 (Mcam) from Rattus norvegicus (Rat).